A 450-amino-acid polypeptide reads, in one-letter code: Phosphoglucosamine mutase (450 aa).

Residue Ser101 is the Phosphoserine intermediate of the active site. Mg(2+)-binding residues include Ser101, Asp240, Asp242, and Asp244. Phosphoserine is present on Ser101.

The protein belongs to the phosphohexose mutase family. Mg(2+) is required as a cofactor. Activated by phosphorylation.

It catalyses the reaction alpha-D-glucosamine 1-phosphate = D-glucosamine 6-phosphate. Its function is as follows. Catalyzes the conversion of glucosamine-6-phosphate to glucosamine-1-phosphate. The protein is Phosphoglucosamine mutase of Streptococcus equi subsp. zooepidemicus (strain MGCS10565).